Here is a 49-residue protein sequence, read N- to C-terminus: Large ribosomal subunit protein bL33 (49 aa).

This sequence belongs to the bacterial ribosomal protein bL33 family.

In Leuconostoc citreum (strain KM20), this protein is Large ribosomal subunit protein bL33.